The sequence spans 1073 residues: MRPFHAYSWIFSQQYMGTKNVKEKNPTIYSFDDEEKRNENKSFLKVLCSKRGVLPIIGILYIILNGNLGYNGSSSSGVQFTDRCSRNLYGETLPVNPYADSENPIVVSQVFGLPFEKPTFTLESPPDIDHTNILGFNEKFMTDVNRYRYSNNYEAIPHISEFNPLIVDKVLFDYNEKVDNLGRSGGDIIKKMQTLWDEIMDINKRKYDSLKEKLQKTYSQYKVQYDMPKEAYESKWTQCIKLIDQGGENLEERLNSQFKNWYRQKYLNLEEYRRLTVLNQIAWKALSNQIQYSCRKIMNSDISSFKHINELKSLEHRAAKAAEAEMKKRAQKPKKKKSRRGWLCCGGGDIETVEPQQEEPVQTVQEQQVNEYGDILPSLRASITNSAINYYDTVKDGVYLDHETSDALYTDEDLLFDLEKQKYMDMLDTSEEESVEENEEEHTVDDEHVEEHTADDEHVEEPTVADDEHVEEPTVADEHVEEPTVAEEHVEEPTVAEEHVEEPASDVQQTSEAAPTIEIPDTLYYDILGVGVNADMNEITERYFKLAENYYPYQRSGSTVFHNFRKVNEAYQVLGDIDKKRWYNKYGYDGIKQVNFMNPSIFYLLSSLEKFKDFTGTPQIVTLLRFFFEKRLSMNDLENKSEHLLKFMEQYQKEREAHVSEYLLNILQPCIAGDSKWNVPIITKLEGLKGSRFDIPILESLRWIFKHVAKTHLKKSSKSAKKLQQRTQANKQELANINNNLMSTLKEYLGSSEQMNSITYNFENINSNVDNGNQSKNISDLSYTDQKEILEKIVSYIVDISLYDIENTALNAAEQLLSDNSVDEKTLKKRAQSLKKLSSIMERYAGGKRNDKKSKNFDTKDIVGYIMHGISTINTEMKNQNENVPEHVQHNAEENVEHDAEENVEHDAEENVEHDAEENVEHDAEENVEHDAEENVEENVEEVEENVEENVEENVEENVEEVEENVEENVEENVEENVEENVEENVEENVEENVEENVEEYDEENVEEVEENVEENVEENVEENVEENVEEVEENVEENVEENVEENVEENVEENVEEYDEENVEEHNEEYDE.

An N-terminal signal peptide occupies residues 1-65 (MRPFHAYSWI…IIGILYIILN (65 aa)). Asn-71 carries N-linked (GlcNAc...) asparagine glycosylation. Residues 428 to 444 (DTSEEESVEENEEEHTV) show a composition bias toward acidic residues. Residues 428–514 (DTSEEESVEE…SDVQQTSEAA (87 aa)) form a disordered region. Residues 436 to 504 (EENEEEHTVD…VAEEHVEEPA (69 aa)) form a tandem repeats 1 region. Positions 445–456 (DDEHVEEHTADD) are enriched in basic and acidic residues. Residues 457-470 (EHVEEPTVADDEHV) show a composition bias toward acidic residues. Positions 476-502 (ADEHVEEPTVAEEHVEEPTVAEEHVEE) are enriched in basic and acidic residues. One can recognise a J domain in the interval 521 to 589 (DTLYYDILGV…KRWYNKYGYD (69 aa)). 3 N-linked (GlcNAc...) asparagine glycosylation sites follow: Asn-639, Asn-773, and Asn-777. Residues 891–1073 (NAEENVEHDA…VEEHNEEYDE (183 aa)) form a tandem repeats 2 region. The span at 894-930 (ENVEHDAEENVEHDAEENVEHDAEENVEHDAEENVEH) shows a compositional bias: basic and acidic residues. Residues 894–1073 (ENVEHDAEEN…VEEHNEEYDE (180 aa)) are disordered. Acidic residues predominate over residues 931-1073 (DAEENVEENV…VEEHNEEYDE (143 aa)).

In terms of processing, the Tyr residues in the variant tetrameric sequences in the RESA repeat are possibly phosphorylated (by homology with band 3).

The protein localises to the cell membrane. May disrupt the normal intermolecular interactions of the cytoplasmic domain of band 3 and thereby facilitate the invagination of the red cell membrane which is necessary for the formation of the parasitophorous vacuole. This is Ring-infected erythrocyte surface antigen (RESA) from Plasmodium falciparum (isolate FC27 / Papua New Guinea).